The primary structure comprises 253 residues: DNA polymerase sliding clamp (253 aa).

Belongs to the PCNA family. Homotrimer. The subunits circularize to form a toroid; DNA passes through its center. Replication factor C (RFC) is required to load the toroid on the DNA.

Functionally, sliding clamp subunit that acts as a moving platform for DNA processing. Responsible for tethering the catalytic subunit of DNA polymerase and other proteins to DNA during high-speed replication. This Methanopyrus kandleri (strain AV19 / DSM 6324 / JCM 9639 / NBRC 100938) protein is DNA polymerase sliding clamp.